Consider the following 33-residue polypeptide: Photosystem II reaction center protein Psb30 (33 aa).

Residues 5–25 form a helical membrane-spanning segment; sequence VIAQLIALALIVGSGPLVIAL.

Belongs to the Psb30/Ycf12 family. PSII is composed of 1 copy each of membrane proteins PsbA, PsbB, PsbC, PsbD, PsbE, PsbF, PsbH, PsbI, PsbJ, PsbK, PsbL, PsbM, PsbT, PsbX, PsbY, PsbZ, Psb30/Ycf12, peripheral proteins of the oxygen-evolving complex and a large number of cofactors. It forms dimeric complexes.

The protein resides in the plastid. It localises to the chloroplast thylakoid membrane. Its function is as follows. A core subunit of photosystem II (PSII), probably helps stabilize the reaction center. The protein is Photosystem II reaction center protein Psb30 of Physcomitrium patens (Spreading-leaved earth moss).